The primary structure comprises 115 residues: U3-lycotoxin-Ls1k (115 aa).

Positions 1–20 are cleaved as a signal peptide; that stretch reads MKFELLFGVLLVTLFSYSSA. Positions 21–44 are excised as a propeptide; it reads EMLDDFDQADEDELLSLIEKEEAR. Disulfide bonds link C48/C63, C55/C72, C62/C87, and C74/C85.

This sequence belongs to the neurotoxin 19 (CSTX) family. 01 subfamily. As to expression, expressed by the venom gland.

The protein resides in the secreted. The polypeptide is U3-lycotoxin-Ls1k (Lycosa singoriensis (Wolf spider)).